Here is a 207-residue protein sequence, read N- to C-terminus: Large ribosomal subunit protein uL4 (207 aa).

The interval 49–78 (HAVKNRSAVSGGGRKPWRQKGTGRARQGSI) is disordered.

Belongs to the universal ribosomal protein uL4 family. In terms of assembly, part of the 50S ribosomal subunit.

Functionally, one of the primary rRNA binding proteins, this protein initially binds near the 5'-end of the 23S rRNA. It is important during the early stages of 50S assembly. It makes multiple contacts with different domains of the 23S rRNA in the assembled 50S subunit and ribosome. Forms part of the polypeptide exit tunnel. This Streptococcus pneumoniae serotype 2 (strain D39 / NCTC 7466) protein is Large ribosomal subunit protein uL4.